We begin with the raw amino-acid sequence, 328 residues long: Malate dehydrogenase (328 aa).

11 to 17 (GAAGQIG) lines the NAD(+) pocket. Arg-94 and Arg-100 together coordinate substrate. Residues Asn-107, Gln-114, and 131–133 (VGN) contribute to the NAD(+) site. Positions 133 and 164 each coordinate substrate. His-189 functions as the Proton acceptor in the catalytic mechanism.

This sequence belongs to the LDH/MDH superfamily. MDH type 2 family.

The catalysed reaction is (S)-malate + NAD(+) = oxaloacetate + NADH + H(+). Its function is as follows. Catalyzes the reversible oxidation of malate to oxaloacetate. In Xanthomonas oryzae pv. oryzae (strain MAFF 311018), this protein is Malate dehydrogenase.